Reading from the N-terminus, the 100-residue chain is Urease subunit gamma (100 aa).

It belongs to the urease gamma subunit family. In terms of assembly, heterotrimer of UreA (gamma), UreB (beta) and UreC (alpha) subunits. Three heterotrimers associate to form the active enzyme. Post-translationally, although not discussed in the published references, Met-1 is represented in the submitted PDB entries as being modified by either a formyl, a carboxyl, or an acetyl group. The N-terminal is probably N-(dihydroxymethyl)methionine, the hydrated form of N-formylmethionine.

It is found in the cytoplasm. The enzyme catalyses urea + 2 H2O + H(+) = hydrogencarbonate + 2 NH4(+). The protein operates within nitrogen metabolism; urea degradation; CO(2) and NH(3) from urea (urease route): step 1/1. The chain is Urease subunit gamma from Sporosarcina pasteurii (Bacillus pasteurii).